A 404-amino-acid polypeptide reads, in one-letter code: Retrotransposable element SLACS 45 kDa protein (404 aa).

Composition is skewed to polar residues over residues 1 to 11 (MVRNLRSSEPQ) and 29 to 41 (PALN…QKQV). 5 disordered regions span residues 1-62 (MVRN…NTSI), 86-111 (KKAA…GRPP), 134-251 (LGKG…KKGA), 317-341 (CRQQ…GAVS), and 369-404 (PKLP…AGPP). The segment covering 98 to 111 (VNKEGNRKKYGRPP) has biased composition (basic and acidic residues). The span at 141-151 (TAHTKSNQSRV) shows a compositional bias: polar residues. The C2H2-type zinc-finger motif lies at 300–321 (CPVCGFAHPEETITVTHCRQQH). Residues 395-404 (HHCDRSAGPP) are compositionally biased toward basic and acidic residues.

The polypeptide is Retrotransposable element SLACS 45 kDa protein (Trypanosoma brucei gambiense).